A 65-amino-acid polypeptide reads, in one-letter code: Large ribosomal subunit protein bL28 (65 aa).

Positions 1–26 (MARRDDLTNKGPMSGNKRSHALNATK) are disordered. Residues 17–26 (KRSHALNATK) show a composition bias toward basic residues.

This sequence belongs to the bacterial ribosomal protein bL28 family.

The chain is Large ribosomal subunit protein bL28 from Mycoplasma mobile (strain ATCC 43663 / 163K / NCTC 11711) (Mesomycoplasma mobile).